Here is a 415-residue protein sequence, read N- to C-terminus: Probable disease resistance protein At5g66890 (415 aa).

The NB-ARC domain occupies 8-43 (SFDALPHNLRECFLDMASFLEDQRIIASTIIDLWSA). LRR repeat units lie at residues 229-251 (SLEKLSLWFCHVVDALNELEDVS), 256-278 (SLQEIEIDYCYNLDELPYWISQV), 280-303 (SLKKLSVTNCNKLCRVIEAIGDLR), 304-326 (DLETLRLSSCASLLELPETIDRL), 328-351 (NLRFLDVSGGFQLKNLPLEIGKLK), and 352-373 (KLEKISMKDCYRCELPDSVKNL). Residues 239-260 (HVVDALNELEDVSETLQSLQEI) are a coiled coil.

It belongs to the disease resistance NB-LRR family.

Possible disease resistance protein. The sequence is that of Probable disease resistance protein At5g66890 from Arabidopsis thaliana (Mouse-ear cress).